The primary structure comprises 214 residues: Pyridoxine/pyridoxamine 5'-phosphate oxidase (214 aa).

Substrate-binding positions include 9 to 12 (RREY) and Lys-67. FMN contacts are provided by residues 62–67 (RTVLLK), 77–78 (YS), Arg-83, Lys-84, and Gln-106. 3 residues coordinate substrate: Tyr-124, Arg-128, and Ser-132. FMN is bound by residues 141–142 (QS) and Trp-186. A substrate-binding site is contributed by 192–194 (RLH). Arg-196 serves as a coordination point for FMN.

This sequence belongs to the pyridoxamine 5'-phosphate oxidase family. As to quaternary structure, homodimer. It depends on FMN as a cofactor.

It catalyses the reaction pyridoxamine 5'-phosphate + O2 + H2O = pyridoxal 5'-phosphate + H2O2 + NH4(+). The catalysed reaction is pyridoxine 5'-phosphate + O2 = pyridoxal 5'-phosphate + H2O2. It functions in the pathway cofactor metabolism; pyridoxal 5'-phosphate salvage; pyridoxal 5'-phosphate from pyridoxamine 5'-phosphate: step 1/1. The protein operates within cofactor metabolism; pyridoxal 5'-phosphate salvage; pyridoxal 5'-phosphate from pyridoxine 5'-phosphate: step 1/1. Functionally, catalyzes the oxidation of either pyridoxine 5'-phosphate (PNP) or pyridoxamine 5'-phosphate (PMP) into pyridoxal 5'-phosphate (PLP). The polypeptide is Pyridoxine/pyridoxamine 5'-phosphate oxidase (Porphyromonas gingivalis (strain ATCC BAA-308 / W83)).